A 1121-amino-acid polypeptide reads, in one-letter code: Peroxisomal ATPase PEX1 (1121 aa).

2 disordered regions span residues 187-221 and 1099-1121; these read SISSVRSDSSGHRIRRVRSSTSTATGRRSVTNNGE and SGRDGNMPDGTASNEIGARSTLM. Over residues 205–217 the composition is skewed to low complexity; it reads SSTSTATGRRSVT.

The protein belongs to the AAA ATPase family. Interacts with PEX6; forming the PEX1-PEX6 AAA ATPase complex, which is composed of a heterohexamer formed by a trimer of PEX1-PEX6 dimers.

It localises to the membrane. The catalysed reaction is ATP + H2O = ADP + phosphate + H(+). In terms of biological role, component of the PEX1-PEX6 AAA ATPase complex involved in peroxisome biosynthesis. The complex acts as a protein dislocase complex that mediates the ATP-dependent extraction of the PEX5 receptor from peroxisomal membranes, an essential step for PEX5 recycling. Specifically recognizes PEX5 monoubiquitinated at 'Cys-6', and pulls it out of the peroxisome lumen through the PEX2-PEX10-PEX12 retrotranslocation channel. Extraction by the PEX1-PEX6 AAA ATPase complex is accompanied by unfolding of the TPR repeats and release of bound cargo from PEX5. The chain is Peroxisomal ATPase PEX1 from Komagataella phaffii (strain GS115 / ATCC 20864) (Yeast).